The following is an 89-amino-acid chain: Small ribosomal subunit protein uS15 (89 aa).

It belongs to the universal ribosomal protein uS15 family. As to quaternary structure, part of the 30S ribosomal subunit. Forms a bridge to the 50S subunit in the 70S ribosome, contacting the 23S rRNA.

One of the primary rRNA binding proteins, it binds directly to 16S rRNA where it helps nucleate assembly of the platform of the 30S subunit by binding and bridging several RNA helices of the 16S rRNA. Its function is as follows. Forms an intersubunit bridge (bridge B4) with the 23S rRNA of the 50S subunit in the ribosome. The sequence is that of Small ribosomal subunit protein uS15 from Pseudomonas savastanoi pv. phaseolicola (strain 1448A / Race 6) (Pseudomonas syringae pv. phaseolicola (strain 1448A / Race 6)).